Here is a 99-residue protein sequence, read N- to C-terminus: IPGGLSPRSVSDPDVQKAAAFAVQEYNAGSANAHYYKELRVVEAQSQSVAGEKYFLMMELVKTKCAKTAGKPKVYKEIQNCELPPIKQQEEKLCGFQVW.

The region spanning 3–99 is the Cystatin domain; that stretch reads GGLSPRSVSD…EEKLCGFQVW (97 aa). Positions 47–51 match the Secondary area of contact motif; sequence QSVAG. Cysteines 65 and 81 form a disulfide.

Belongs to the cystatin family. As to expression, expressed by the venom gland.

It is found in the secreted. Its function is as follows. Inhibits various C1 cysteine proteases including cathepsin L (Ki is 0.1 nM), papain (Ki is 0.19 nM), cathepsin S (Ki is 1.2 nM), and cathepsin B (Ki is 2.5 nM). This protein has no toxic activity and its function in the venom is unknown. It may play a role as housekeeping or regulatory protein. The polypeptide is Cystatin (Naja atra (Chinese cobra)).